A 469-amino-acid polypeptide reads, in one-letter code: Probable Xaa-Pro aminopeptidase PEPP (469 aa).

The Mn(2+) site is built by Asp264, Asp275, Glu398, and Glu438.

This sequence belongs to the peptidase M24B family. The cofactor is Mn(2+).

The catalysed reaction is Release of any N-terminal amino acid, including proline, that is linked to proline, even from a dipeptide or tripeptide.. Its function is as follows. Catalyzes the removal of a penultimate prolyl residue from the N-termini of peptides. The polypeptide is Probable Xaa-Pro aminopeptidase PEPP (PEPP) (Ajellomyces capsulatus (strain H143) (Darling's disease fungus)).